The sequence spans 553 residues: Cytokine-like nuclear factor N-PAC (553 aa).

Positions 8–66 (LGDLVWGKLGRYPPWPGKIVNPPKDLKKPRGKKCFFVKFFGTEDHAWIKVEQLKPYHLH) constitute a PWWP domain. 2 stretches are compositionally biased toward basic and acidic residues: residues 92 to 145 (KTKG…EGKK) and 162 to 182 (RAQD…KDLT). The segment at 92–188 (KTKGKDQASS…KDLTIPESST (97 aa)) is disordered. The a.T hook DNA-binding region spans 168–180 (PRKRGRPPKDEKD). Residues 214–217 (DPHF) are interaction with histone H3. Positions 261–553 (GSITPTDKKI…MSAVYRAYIH (293 aa)) are dehydrogenase domain. NAD(+) is bound by residues 271–285 (GFLG…IVSN), T362, and K505.

It belongs to the HIBADH-related family. NP60 subfamily. In terms of assembly, homotetramere. Binds to mononucleosomes.

It is found in the nucleus. The protein localises to the chromosome. In terms of biological role, cytokine-like nuclear factor with chromatin gene reader activity involved in chromatin modification and regulation of gene expression. Acts as a nucleosome-destabilizing factor that is recruited to genes during transcriptional activation. Recognizes and binds histone H3 without a preference for specific epigenetic markers and also binds DNA. Interacts with KDM1B and promotes its histone demethylase activity by facilitating the capture of H3 tails, they form a multifunctional enzyme complex that modifies transcribed chromatin and facilitates Pol II transcription through nucleosomes. In Gallus gallus (Chicken), this protein is Cytokine-like nuclear factor N-PAC (GLYR1).